Consider the following 504-residue polypeptide: Maturase K (504 aa).

It belongs to the intron maturase 2 family. MatK subfamily.

The protein localises to the plastid. Its subcellular location is the chloroplast. In terms of biological role, usually encoded in the trnK tRNA gene intron. Probably assists in splicing its own and other chloroplast group II introns. The sequence is that of Maturase K from Hamamelis virginiana (Witch-hazel).